The sequence spans 103 residues: uncharacterized protein (103 aa).

A disordered region spans residues 1–103 (MAGARRRARC…WRGGSCTSQR (103 aa)). Positions 35–44 (GSGQPRWWPW) are enriched in low complexity. 2 stretches are compositionally biased toward basic residues: residues 55–65 (RRPGPGRRARS) and 74–84 (RPPHSRTRARR).

The protein belongs to the epstein-barr virus RPMS1 family.

This is an uncharacterized protein from Homo sapiens (Human).